Reading from the N-terminus, the 336-residue chain is Probable tRNA pseudouridine synthase B (336 aa).

Asp81 acts as the Nucleophile in catalysis. The region spanning 248 to 323 is the PUA domain; the sequence is LKKVVVKDSA…VAVDVERVYM (76 aa).

It belongs to the pseudouridine synthase TruB family. Type 2 subfamily.

The enzyme catalyses uridine(55) in tRNA = pseudouridine(55) in tRNA. Could be responsible for synthesis of pseudouridine from uracil-55 in the psi GC loop of transfer RNAs. The protein is Probable tRNA pseudouridine synthase B of Methanocaldococcus jannaschii (strain ATCC 43067 / DSM 2661 / JAL-1 / JCM 10045 / NBRC 100440) (Methanococcus jannaschii).